We begin with the raw amino-acid sequence, 214 residues long: 3-isopropylmalate dehydratase small subunit (214 aa).

It belongs to the LeuD family. LeuD type 1 subfamily. In terms of assembly, heterodimer of LeuC and LeuD.

It carries out the reaction (2R,3S)-3-isopropylmalate = (2S)-2-isopropylmalate. It functions in the pathway amino-acid biosynthesis; L-leucine biosynthesis; L-leucine from 3-methyl-2-oxobutanoate: step 2/4. In terms of biological role, catalyzes the isomerization between 2-isopropylmalate and 3-isopropylmalate, via the formation of 2-isopropylmaleate. The sequence is that of 3-isopropylmalate dehydratase small subunit from Pseudomonas putida (strain GB-1).